Reading from the N-terminus, the 266-residue chain is Large ribosomal subunit protein uL2m (266 aa).

It belongs to the universal ribosomal protein uL2 family.

Its subcellular location is the mitochondrion. This Dictyostelium discoideum (Social amoeba) protein is Large ribosomal subunit protein uL2m (mrpl2).